A 401-amino-acid chain; its full sequence is MRTVWQHCHVATMAEGRYSAIEDAAIVTSAGLIEWIGPRAELAPVDADRTVDLGGAWITPGLIDCHTHAVFGGNRSGEFEQRLQGVSYAEIAAQGGGIASTVRATRAASEDELFASARQRVQALMRDGVTTLEIKSGYGLDLANERKMLRVARRLADELPLAVRATCLAAHALPPEYAGRADDYIAHICDEMLPALAAEGLVDAVDAFCEHLAFSPAQVERLFIKARELGLPVKLHAEQLSSLHGSSLAARYQALSADHLEFMTEEDAIAMAAAGTVAVLLPGAFYFLRETQLPPMDALRRHGVKIALASDLNPGTSPGLSLRLMLNMGCTCFRMTPEEALAGVTVHAATALGLGDSHGSLEVGKVADFVAWQIERPADLAYWLGGDLPKRVVRKGHEISN.

Fe(3+) is bound by residues His-66 and His-68. Residues His-66 and His-68 each coordinate Zn(2+). 4-imidazolone-5-propanoate contacts are provided by Arg-75, Tyr-138, and His-171. Tyr-138 is an N-formimidoyl-L-glutamate binding site. His-236 lines the Fe(3+) pocket. Residue His-236 participates in Zn(2+) binding. Gln-239 is a 4-imidazolone-5-propanoate binding site. Asp-311 contacts Fe(3+). Asp-311 is a binding site for Zn(2+). Residues Asn-313 and Gly-315 each contribute to the N-formimidoyl-L-glutamate site. Position 316 (Thr-316) interacts with 4-imidazolone-5-propanoate.

This sequence belongs to the metallo-dependent hydrolases superfamily. HutI family. Requires Zn(2+) as cofactor. It depends on Fe(3+) as a cofactor.

It localises to the cytoplasm. It catalyses the reaction 4-imidazolone-5-propanoate + H2O = N-formimidoyl-L-glutamate. It participates in amino-acid degradation; L-histidine degradation into L-glutamate; N-formimidoyl-L-glutamate from L-histidine: step 3/3. Its function is as follows. Catalyzes the hydrolytic cleavage of the carbon-nitrogen bond in imidazolone-5-propanoate to yield N-formimidoyl-L-glutamate. It is the third step in the universal histidine degradation pathway. The chain is Imidazolonepropionase from Pseudomonas putida (Arthrobacter siderocapsulatus).